The sequence spans 332 residues: Ferredoxin--NADP reductase 1 (332 aa).

7 residues coordinate FAD: Asp35, Lys43, Phe48, Val88, Phe123, Asp284, and Thr325.

Belongs to the ferredoxin--NADP reductase type 2 family. In terms of assembly, homodimer. Requires FAD as cofactor.

It carries out the reaction 2 reduced [2Fe-2S]-[ferredoxin] + NADP(+) + H(+) = 2 oxidized [2Fe-2S]-[ferredoxin] + NADPH. In Listeria monocytogenes serovar 1/2a (strain ATCC BAA-679 / EGD-e), this protein is Ferredoxin--NADP reductase 1.